The following is a 275-amino-acid chain: Centromere protein V (275 aa).

2 stretches are compositionally biased toward low complexity: residues 1-10 (MRRSRSSAAA) and 17-51 (RSGA…QAGS). The segment at 1 to 109 (MRRSRSSAAA…ATPTSSASNL (109 aa)) is disordered. Serine 18 and serine 21 each carry phosphoserine. Omega-N-methylarginine is present on arginine 43. Positions 79-100 (GEPPPPELALLPPPPPPPPTPA) are enriched in pro residues. Residues threonine 98, threonine 101, and threonine 103 each carry the phosphothreonine modification. Residues 148–260 (HTGGCHCGAV…TEEFNGSDWE (113 aa)) form the CENP-V/GFA domain. Zn(2+) is bound by residues cysteine 152, cysteine 154, cysteine 172, cysteine 174, cysteine 177, cysteine 216, and cysteine 219. The residue at position 257 (serine 257) is a Phosphoserine.

Belongs to the Gfa family. Zn(2+) is required as a cofactor.

The protein resides in the chromosome. It is found in the centromere. It localises to the kinetochore. Its subcellular location is the nucleus. The protein localises to the cytoplasm. The protein resides in the cytoskeleton. It is found in the spindle. In terms of biological role, required for distribution of pericentromeric heterochromatin in interphase nuclei and for centromere formation and organization, chromosome alignment and cytokinesis. This Homo sapiens (Human) protein is Centromere protein V (CENPV).